The following is an 89-amino-acid chain: MERMTAWVHGFVQGVGFRWWTRARALELGLVGYAANQKDGRVLVIAEGPRDKLETLLTLLRSGDTPGAVDLVVEQWDSARGDLTGFVER.

One can recognise an Acylphosphatase-like domain in the interval 3-89 (RMTAWVHGFV…RGDLTGFVER (87 aa)). Residues arginine 18 and asparagine 36 contribute to the active site.

It belongs to the acylphosphatase family.

It carries out the reaction an acyl phosphate + H2O = a carboxylate + phosphate + H(+). In Rhodococcus jostii (strain RHA1), this protein is Acylphosphatase (acyP).